Reading from the N-terminus, the 482-residue chain is ATP synthase subunit beta (482 aa).

Position 161-168 (161-168 (GGAGVGKT)) interacts with ATP.

This sequence belongs to the ATPase alpha/beta chains family. F-type ATPases have 2 components, CF(1) - the catalytic core - and CF(0) - the membrane proton channel. CF(1) has five subunits: alpha(3), beta(3), gamma(1), delta(1), epsilon(1). CF(0) has four main subunits: a(1), b(1), b'(1) and c(9-12).

The protein resides in the cellular thylakoid membrane. It catalyses the reaction ATP + H2O + 4 H(+)(in) = ADP + phosphate + 5 H(+)(out). In terms of biological role, produces ATP from ADP in the presence of a proton gradient across the membrane. The catalytic sites are hosted primarily by the beta subunits. The polypeptide is ATP synthase subunit beta (Gloeothece citriformis (strain PCC 7424) (Cyanothece sp. (strain PCC 7424))).